The sequence spans 294 residues: 33 kDa chaperonin (294 aa).

Intrachain disulfides connect Cys-238–Cys-240 and Cys-271–Cys-274.

This sequence belongs to the HSP33 family. Under oxidizing conditions two disulfide bonds are formed involving the reactive cysteines. Under reducing conditions zinc is bound to the reactive cysteines and the protein is inactive.

It localises to the cytoplasm. Functionally, redox regulated molecular chaperone. Protects both thermally unfolding and oxidatively damaged proteins from irreversible aggregation. Plays an important role in the bacterial defense system toward oxidative stress. This is 33 kDa chaperonin from Staphylococcus haemolyticus (strain JCSC1435).